Consider the following 333-residue polypeptide: MATLKDKLIGHLATSQEPRSYNKITVVGVGAVGMACAISILMKDLADEVALVDVMEDKLKGEMMDLQHGSLFLHTAKIVSGKDYSVSAGSKLVVITAGARQQEGESRLNLVQRNVNIFKFIIPDIVKHSPDCIILVVSNPVDVLTYVAWKLSGLPMHRIIGSGCNLDSARFRYLMGERLGVHSSSCHGWVIGEHGDSSVPVWSGMNVAGVSLKELHPELGTDKDKENWKKLHKDVVDSAYEVIKLKGYTSWAIGLSVADLAETIMKNLCRVHPVSTMVKDFYGIKNDVFLSLPCVLDNHGISNIVKMKLKPDEEQQLQKSATTLWDIQKDLKF.

Residue Ala-2 is modified to N-acetylalanine. NAD(+) is bound by residues 30–58 and Arg-100; that span reads GAVG…MEDK. Substrate contacts are provided by Arg-107, Asn-139, and Arg-170. Asn-139 is a binding site for NAD(+). Catalysis depends on His-194, which acts as the Proton acceptor. Thr-249 provides a ligand contact to substrate.

It belongs to the LDH/MDH superfamily. LDH family. In terms of assembly, homotetramer.

It is found in the cytoplasm. It carries out the reaction (S)-lactate + NAD(+) = pyruvate + NADH + H(+). The protein operates within fermentation; pyruvate fermentation to lactate; (S)-lactate from pyruvate: step 1/1. Its function is as follows. Interconverts simultaneously and stereospecifically pyruvate and lactate with concomitant interconversion of NADH and NAD(+). This is L-lactate dehydrogenase A chain (ldha) from Squalus acanthias (Spiny dogfish).